The sequence spans 309 residues: Ribonuclease H2 subunit B (309 aa).

At Ala2 the chain carries N-acetylalanine. Lys295 is subject to N6-acetyllysine. Ser296 carries the phosphoserine modification.

The protein belongs to the RNase H2 subunit B family. In terms of assembly, the RNase H2 complex is a heterotrimer composed of the catalytic subunit RNASEH2A and the non-catalytic subunits RNASEH2B and RNASEH2C.

It localises to the nucleus. Functionally, non catalytic subunit of RNase H2, an endonuclease that specifically degrades the RNA of RNA:DNA hybrids. Participates in DNA replication, possibly by mediating the removal of lagging-strand Okazaki fragment RNA primers during DNA replication. Mediates the excision of single ribonucleotides from DNA:RNA duplexes. This Bos taurus (Bovine) protein is Ribonuclease H2 subunit B (RNASEH2B).